The following is a 117-amino-acid chain: Putative phosphotransferase enzyme IIB component MPN_268 (117 aa).

Residues 1-21 (MKVLLWIGYVLSFGLLYLYLV) traverse the membrane as a helical segment. Positions 42 to 117 (PFAVRDFIAA…QLKQQIENER (76 aa)) constitute a PTS EIIB type-1 domain.

It localises to the membrane. In terms of biological role, the phosphoenolpyruvate-dependent sugar phosphotransferase system (PTS), a major carbohydrate active -transport system, catalyzes the phosphorylation of incoming sugar substrates concomitant with their translocation across the cell membrane. The protein is Putative phosphotransferase enzyme IIB component MPN_268 of Mycoplasma pneumoniae (strain ATCC 29342 / M129 / Subtype 1) (Mycoplasmoides pneumoniae).